We begin with the raw amino-acid sequence, 351 residues long: Riboflavin-binding protein RibY (351 aa).

Residues 1-19 (MMKLRVLTLGILIILLITA) form the signal peptide. A lipid anchor (N-palmitoyl cysteine) is attached at Cys20. The S-diacylglycerol cysteine moiety is linked to residue Cys20.

It belongs to the NMT1 family. As to quaternary structure, the complex is likely composed of an ATP-binding protein, a transmembrane protein (RibX) and a solute-binding protein (RibY).

The protein resides in the cell membrane. Functionally, part of an ABC transporter complex that transports riboflavin into the cell. Binds riboflavin. This Chloroflexus aurantiacus (strain ATCC 29366 / DSM 635 / J-10-fl) protein is Riboflavin-binding protein RibY.